The sequence spans 352 residues: Anthranilate phosphoribosyltransferase (352 aa).

5-phospho-alpha-D-ribose 1-diphosphate-binding positions include G83, 86 to 87 (GD), T91, 93 to 96 (NIST), 111 to 119 (KHGGRSVSS), and A123. G83 contributes to the anthranilate binding site. S95 provides a ligand contact to Mg(2+). Position 169 (R169) interacts with anthranilate. Mg(2+) contacts are provided by D228 and E229.

The protein belongs to the anthranilate phosphoribosyltransferase family. In terms of assembly, homodimer. Mg(2+) is required as a cofactor.

It catalyses the reaction N-(5-phospho-beta-D-ribosyl)anthranilate + diphosphate = 5-phospho-alpha-D-ribose 1-diphosphate + anthranilate. The protein operates within amino-acid biosynthesis; L-tryptophan biosynthesis; L-tryptophan from chorismate: step 2/5. Functionally, catalyzes the transfer of the phosphoribosyl group of 5-phosphorylribose-1-pyrophosphate (PRPP) to anthranilate to yield N-(5'-phosphoribosyl)-anthranilate (PRA). This chain is Anthranilate phosphoribosyltransferase, found in Neisseria meningitidis serogroup A / serotype 4A (strain DSM 15465 / Z2491).